A 393-amino-acid chain; its full sequence is Sedoheptulose-1,7-bisphosphatase, chloroplastic (393 aa).

A disulfide bond links Cys115 and Cys120. Mg(2+) contacts are provided by Asp126, Glu155, Asp176, Leu178, and Asp179. Substrate contacts are provided by residues 179 to 182 (DGSS), Tyr290, and Lys320. A Mg(2+)-binding site is contributed by Glu326.

The protein belongs to the FBPase class 1 family. As to quaternary structure, homodimer. Mg(2+) serves as cofactor.

It localises to the plastid. The protein resides in the chloroplast. The catalysed reaction is D-sedoheptulose 1,7-bisphosphate + H2O = D-sedoheptulose 7-phosphate + phosphate. The protein operates within carbohydrate biosynthesis; Calvin cycle. This Triticum aestivum (Wheat) protein is Sedoheptulose-1,7-bisphosphatase, chloroplastic.